Here is a 756-residue protein sequence, read N- to C-terminus: Probable cleavage and polyadenylation specificity factor subunit 2 (756 aa).

A phosphothreonine mark is found at Thr-221 and Thr-226.

It belongs to the metallo-beta-lactamase superfamily. RNA-metabolizing metallo-beta-lactamase-like family. CPSF2/YSH1 subfamily. As to quaternary structure, component of the cleavage and polyadenylation specificity factor (CPSF) complex, composed of at least Clp, Cpsf73, Cpsf100 and Cpsf160. Interacts with Sym and Cpsf73 forming a core cleavage factor required for both polyadenylated and histone mRNA processing. Interacts with Slbp and Lsm11.

It is found in the nucleus. Functionally, component of the cleavage and polyadenylation specificity factor (CPSF) complex that plays a key role in pre-mRNA 3'-end formation, recognizing the AAUAAA signal sequence and interacting with poly(A) polymerase and other factors to bring about cleavage and poly(A) addition. Required for the cotranscriptional processing of 3'-ends of polyadenylated and histone pre-mRNA. This is Probable cleavage and polyadenylation specificity factor subunit 2 (Cpsf100) from Drosophila melanogaster (Fruit fly).